Reading from the N-terminus, the 285-residue chain is Probable endonuclease 4 (285 aa).

H69, H109, E145, D179, H182, H216, D229, H231, and E261 together coordinate Zn(2+).

Belongs to the AP endonuclease 2 family. It depends on Zn(2+) as a cofactor.

The catalysed reaction is Endonucleolytic cleavage to 5'-phosphooligonucleotide end-products.. Its function is as follows. Endonuclease IV plays a role in DNA repair. It cleaves phosphodiester bonds at apurinic or apyrimidinic (AP) sites, generating a 3'-hydroxyl group and a 5'-terminal sugar phosphate. This is Probable endonuclease 4 from Citrobacter koseri (strain ATCC BAA-895 / CDC 4225-83 / SGSC4696).